The sequence spans 468 residues: 6-phosphogluconate dehydrogenase, decarboxylating (468 aa).

NADP(+)-binding positions include 10–15, 33–35, 74–76, and asparagine 102; these read GMAVMG, NRS, and VKA. Residues asparagine 102 and 128–130 contribute to the substrate site; that span reads SGG. The active-site Proton acceptor is lysine 183. Substrate is bound at residue 186-187; it reads HN. Glutamate 190 (proton donor) is an active-site residue. Substrate-binding residues include tyrosine 191, lysine 260, arginine 287, arginine 445, and histidine 451.

The protein belongs to the 6-phosphogluconate dehydrogenase family. Homodimer.

It carries out the reaction 6-phospho-D-gluconate + NADP(+) = D-ribulose 5-phosphate + CO2 + NADPH. Its pathway is carbohydrate degradation; pentose phosphate pathway; D-ribulose 5-phosphate from D-glucose 6-phosphate (oxidative stage): step 3/3. Catalyzes the oxidative decarboxylation of 6-phosphogluconate to ribulose 5-phosphate and CO(2), with concomitant reduction of NADP to NADPH. The protein is 6-phosphogluconate dehydrogenase, decarboxylating (gnd) of Escherichia coli (strain K12).